Reading from the N-terminus, the 278-residue chain is Probable 3-hydroxybutyryl-CoA dehydrogenase (278 aa).

The protein belongs to the 3-hydroxyacyl-CoA dehydrogenase family.

The enzyme catalyses (3S)-3-hydroxybutanoyl-CoA + NADP(+) = acetoacetyl-CoA + NADPH + H(+). It participates in lipid metabolism; butanoate metabolism. In Deinococcus radiodurans (strain ATCC 13939 / DSM 20539 / JCM 16871 / CCUG 27074 / LMG 4051 / NBRC 15346 / NCIMB 9279 / VKM B-1422 / R1), this protein is Probable 3-hydroxybutyryl-CoA dehydrogenase (hbd).